The chain runs to 109 residues: Nucleoid-associated protein A1S_1684 (109 aa).

This sequence belongs to the YbaB/EbfC family. In terms of assembly, homodimer.

Its subcellular location is the cytoplasm. It is found in the nucleoid. Binds to DNA and alters its conformation. May be involved in regulation of gene expression, nucleoid organization and DNA protection. The polypeptide is Nucleoid-associated protein A1S_1684 (Acinetobacter baumannii (strain ATCC 17978 / DSM 105126 / CIP 53.77 / LMG 1025 / NCDC KC755 / 5377)).